Consider the following 343-residue polypeptide: S-adenosylmethionine:tRNA ribosyltransferase-isomerase (343 aa).

Belongs to the QueA family. As to quaternary structure, monomer.

It localises to the cytoplasm. It catalyses the reaction 7-aminomethyl-7-carbaguanosine(34) in tRNA + S-adenosyl-L-methionine = epoxyqueuosine(34) in tRNA + adenine + L-methionine + 2 H(+). It participates in tRNA modification; tRNA-queuosine biosynthesis. Transfers and isomerizes the ribose moiety from AdoMet to the 7-aminomethyl group of 7-deazaguanine (preQ1-tRNA) to give epoxyqueuosine (oQ-tRNA). This chain is S-adenosylmethionine:tRNA ribosyltransferase-isomerase, found in Latilactobacillus sakei subsp. sakei (strain 23K) (Lactobacillus sakei subsp. sakei).